The following is a 134-amino-acid chain: Acyl carrier protein, mitochondrial (134 aa).

Residues Met1 to Tyr46 constitute a mitochondrion transit peptide. In terms of domain architecture, Carrier spans Asp55–Pro131. An O-(pantetheine 4'-phosphoryl)serine modification is found at Ser91.

This sequence belongs to the acyl carrier protein (ACP) family. Complex I is composed of about 30 different subunits. Post-translationally, 4'-phosphopantetheine is transferred from CoA to a specific serine of apo-ACP by acpS. This modification is essential for activity because fatty acids are bound in thioester linkage to the sulfhydryl of the prosthetic group.

It is found in the mitochondrion. It functions in the pathway lipid metabolism; fatty acid biosynthesis. Its function is as follows. Carrier of the growing fatty acid chain in fatty acid biosynthesis. May be involved in the synthesis of very-long-chain fatty acids. Accessory and non-catalytic subunit of the mitochondrial membrane respiratory chain NADH dehydrogenase (Complex I), which functions in the transfer of electrons from NADH to the respiratory chain. The chain is Acyl carrier protein, mitochondrial (nuo-12) from Neurospora crassa (strain ATCC 24698 / 74-OR23-1A / CBS 708.71 / DSM 1257 / FGSC 987).